A 275-amino-acid polypeptide reads, in one-letter code: Thymidylate synthase (275 aa).

138-139 (RR) lines the dUMP pocket. Cysteine 158 functions as the Nucleophile in the catalytic mechanism. DUMP contacts are provided by residues 178–181 (RSCD), asparagine 189, and 219–221 (HIY). Aspartate 181 lines the (6R)-5,10-methylene-5,6,7,8-tetrahydrofolate pocket. Alanine 274 serves as a coordination point for (6R)-5,10-methylene-5,6,7,8-tetrahydrofolate.

Belongs to the thymidylate synthase family. Bacterial-type ThyA subfamily. In terms of assembly, homodimer.

Its subcellular location is the cytoplasm. The enzyme catalyses dUMP + (6R)-5,10-methylene-5,6,7,8-tetrahydrofolate = 7,8-dihydrofolate + dTMP. It participates in pyrimidine metabolism; dTTP biosynthesis. In terms of biological role, catalyzes the reductive methylation of 2'-deoxyuridine-5'-monophosphate (dUMP) to 2'-deoxythymidine-5'-monophosphate (dTMP) while utilizing 5,10-methylenetetrahydrofolate (mTHF) as the methyl donor and reductant in the reaction, yielding dihydrofolate (DHF) as a by-product. This enzymatic reaction provides an intracellular de novo source of dTMP, an essential precursor for DNA biosynthesis. This chain is Thymidylate synthase, found in Fusobacterium nucleatum subsp. nucleatum (strain ATCC 25586 / DSM 15643 / BCRC 10681 / CIP 101130 / JCM 8532 / KCTC 2640 / LMG 13131 / VPI 4355).